The sequence spans 576 residues: Adenine deaminase (576 aa).

The protein belongs to the metallo-dependent hydrolases superfamily. Adenine deaminase family. Mn(2+) serves as cofactor.

The enzyme catalyses adenine + H2O + H(+) = hypoxanthine + NH4(+). The polypeptide is Adenine deaminase (Bacillus pumilus (strain SAFR-032)).